A 370-amino-acid chain; its full sequence is Cobalt-precorrin-5B C(1)-methyltransferase (370 aa).

This sequence belongs to the CbiD family.

It carries out the reaction Co-precorrin-5B + S-adenosyl-L-methionine = Co-precorrin-6A + S-adenosyl-L-homocysteine. It participates in cofactor biosynthesis; adenosylcobalamin biosynthesis; cob(II)yrinate a,c-diamide from sirohydrochlorin (anaerobic route): step 6/10. Its function is as follows. Catalyzes the methylation of C-1 in cobalt-precorrin-5B to form cobalt-precorrin-6A. This is Cobalt-precorrin-5B C(1)-methyltransferase from Pseudomonas savastanoi pv. phaseolicola (strain 1448A / Race 6) (Pseudomonas syringae pv. phaseolicola (strain 1448A / Race 6)).